The primary structure comprises 403 residues: JmjC domain-containing histone demethylation protein 1 (403 aa).

In terms of domain architecture, JmjC spans 141–328 (WSLREWCNYF…QQLKIVDVEK (188 aa)). Threonine 221 is a binding site for substrate. Fe cation contacts are provided by histidine 224 and aspartate 226. Substrate is bound at residue lysine 241. Histidine 296 contributes to the Fe cation binding site.

It belongs to the JHDM1 histone demethylase family. Fe(2+) serves as cofactor.

It is found in the nucleus. The catalysed reaction is N(6),N(6)-dimethyl-L-lysyl(36)-[histone H3] + 2 2-oxoglutarate + 2 O2 = L-lysyl(36)-[histone H3] + 2 formaldehyde + 2 succinate + 2 CO2. Its function is as follows. Histone demethylase that specifically demethylates 'Lys-36' of histone H3, thereby playing a central role in histone code. This Candida glabrata (strain ATCC 2001 / BCRC 20586 / JCM 3761 / NBRC 0622 / NRRL Y-65 / CBS 138) (Yeast) protein is JmjC domain-containing histone demethylation protein 1 (JHD1).